Here is a 221-residue protein sequence, read N- to C-terminus: VDLDDQGERTFTFMVRPSADLFLVEEDLPQFAAGQWLHVCSIALSAEPSRSTTFAAMESIRSAGGRVSFDPNIRPDLWQDQALLLACLDRALHMANVVKLSEEELVFISSSNDLAYGIASVTERYQPELLLVTRGKAGVLAAFQQKFTHFNARPVASVDTTGAGDAFVAGLLASLAANGMPTDMTALEPTLTLAQTCGALATTAKGAMTALPYQRDLNRQF.

It belongs to the carbohydrate kinase PfkB family.

It carries out the reaction D-fructose + ATP = D-fructose 6-phosphate + ADP + H(+). This Salmonella thompson protein is Fructokinase (scrK).